A 150-amino-acid polypeptide reads, in one-letter code: Transmembrane protein PMIS2 (150 aa).

Low complexity predominate over residues 1 to 12 (MALKPPSATQPA). Residues 1–61 (MALKPPSATQ…EPQEPTQTPE (61 aa)) form a disordered region. The span at 13-22 (PNAPATPDAP) shows a compositional bias: pro residues. Low complexity predominate over residues 23–61 (PTTGDPGASAAPGSPTTTGGPGAPAEVPQEPQEPTQTPE). A run of 2 helical transmembrane segments spans residues 71 to 91 (LCLTIFAILLFPPFGLAALYF) and 130 to 150 (GWFGAFVVMIGLGIIYGLVLY).

Belongs to the CD225/Dispanin family.

The protein resides in the membrane. In terms of biological role, may play a role in spermatozoa mobility. The protein is Transmembrane protein PMIS2 of Homo sapiens (Human).